Here is a 431-residue protein sequence, read N- to C-terminus: Nuclear bridge Ish domain protein les1 (431 aa).

An N-terminal signal peptide occupies residues 1 to 21 (MQPRFLLHGALLALGIQLCLS).

Its subcellular location is the nucleus inner membrane. In terms of biological role, inner nuclear envelope protein involved in nuclear fission, which is achieved via local disassembly of nuclear pores within the narrow bridge that links segregating daughter nuclei. Les1 restricts the process of local nuclear envelope breakdown to the bridge midzone to prevent the leakage of material from daughter nuclei during mitosis. The sequence is that of Nuclear bridge Ish domain protein les1 from Schizosaccharomyces pombe (strain 972 / ATCC 24843) (Fission yeast).